The primary structure comprises 74 residues: Putative antitoxin VapB48 (74 aa).

Functionally, possibly the antitoxin component of a type II toxin-antitoxin (TA) system. Its cognate toxin is VapC48 (Potential). This chain is Putative antitoxin VapB48 (vapB48), found in Mycobacterium tuberculosis (strain CDC 1551 / Oshkosh).